An 83-amino-acid chain; its full sequence is Small ribosomal subunit protein bS16 (83 aa).

It belongs to the bacterial ribosomal protein bS16 family.

This chain is Small ribosomal subunit protein bS16, found in Pseudomonas fluorescens (strain ATCC BAA-477 / NRRL B-23932 / Pf-5).